The primary structure comprises 418 residues: Xanthosine permease (418 aa).

Residues 1–9 (MSIAMRLKV) lie on the Cytoplasmic side of the membrane. Residues 10–30 (MSFLQYFIWGSWLVTLGSYMI) traverse the membrane as a helical segment. At 31-41 (NTLHFTGANVG) the chain is on the periplasmic side. The chain crosses the membrane as a helical span at residues 42-62 (MVYSSKGIAAIIMPGIMGIIA). Residues 63-70 (DKWLRAER) are Cytoplasmic-facing. Transmembrane regions (helical) follow at residues 71 to 91 (AYML…SVTD) and 92 to 112 (PDMM…TIAL). The Cytoplasmic segment spans residues 113–136 (SNSVSYSCLAQAGLDPVTAFPPIR). A helical transmembrane segment spans residues 137–157 (VFGTVGFIVAMWAVSLLHLEL). The Periplasmic portion of the chain corresponds to 158–159 (SS). A helical transmembrane segment spans residues 160-180 (LQLYIASGASLLLSAYALTLP). Over 181-209 (KIPVAEKKATTSLASKLGLDAFVLFKNPR) the chain is Cytoplasmic. A helical membrane pass occupies residues 210 to 230 (MAIFFLFAMMLGAVLQITNVF). Over 231–254 (GNPFLHDFARNPEFADSFVVKYPS) the chain is Periplasmic. A helical membrane pass occupies residues 255–275 (ILLSVSQMAEVGFILTIPFFL). The Cytoplasmic portion of the chain corresponds to 276–277 (KR). The chain crosses the membrane as a helical span at residues 278 to 298 (FGIKTVMLMSMVAWTLRFGFF). At 299–306 (AYGDPSTT) the chain is on the periplasmic side. The chain crosses the membrane as a helical span at residues 307–327 (GFILLLLSMIVYGCAFDFFNI). Over 328–348 (SGSVFVEQEVDSSIRASAQGL) the chain is Cytoplasmic. Residues 349-369 (FMTMVNGVGAWVGSILSGMAV) traverse the membrane as a helical segment. Residues 370–381 (DYFSVDGVKDWQ) are Periplasmic-facing. Residues 382–402 (TIWLVFAGYALFLAVIFFFGF) traverse the membrane as a helical segment. The Cytoplasmic segment spans residues 403–418 (KYNHDPEKIKHRAVTH).

The protein belongs to the major facilitator superfamily. Nucleoside:H(+) symporter (NHS) (TC 2.A.1.10) family.

It localises to the cell inner membrane. It carries out the reaction xanthosine(in) + H(+)(in) = xanthosine(out) + H(+)(out). Transport is abolished by the proton uncoupler 2,4-dinitrophenol. Uptake of xanthosine. Can also transport other nucleosides such as inosine, adenosine, cytidine, uridine and thymidine. Transport is driven by a proton motive force. The chain is Xanthosine permease from Escherichia coli (strain K12).